A 377-amino-acid chain; its full sequence is Dihydroorotate dehydrogenase (quinone) (377 aa).

Residues 78-82 and Ala102 each bind FMN; that span reads AGCDK. Residue Lys82 participates in substrate binding. Substrate is bound at residue 127 to 130; that stretch reads NRLG. The FMN site is built by Asn159 and Asn192. Residue Asn192 coordinates substrate. Catalysis depends on Ser195, which acts as the Nucleophile. Asn197 contributes to the substrate binding site. Residues Lys230 and Thr258 each contribute to the FMN site. Substrate is bound at residue 259–260; the sequence is NT. FMN-binding positions include Gly288, Gly317, and 338-339; that span reads YT.

The protein belongs to the dihydroorotate dehydrogenase family. Type 2 subfamily. Monomer. Requires FMN as cofactor.

The protein resides in the cell membrane. The enzyme catalyses (S)-dihydroorotate + a quinone = orotate + a quinol. It functions in the pathway pyrimidine metabolism; UMP biosynthesis via de novo pathway; orotate from (S)-dihydroorotate (quinone route): step 1/1. Its function is as follows. Catalyzes the conversion of dihydroorotate to orotate with quinone as electron acceptor. The chain is Dihydroorotate dehydrogenase (quinone) from Rippkaea orientalis (strain PCC 8801 / RF-1) (Cyanothece sp. (strain PCC 8801)).